A 105-amino-acid polypeptide reads, in one-letter code: Late embryogenesis abundant protein Lea5-A (105 aa).

Belongs to the LEA type 3 family.

In Gossypium hirsutum (Upland cotton), this protein is Late embryogenesis abundant protein Lea5-A (LEA5-A).